A 361-amino-acid polypeptide reads, in one-letter code: Prostaglandin D2 receptor (361 aa).

Residues 1-21 (MRPLFYRCHNTTSVEKGNSAT) are Extracellular-facing. Residue Asn-10 is glycosylated (N-linked (GlcNAc...) asparagine). Residues 22 to 42 (MGGVLFSTGLVGNLLALGLLA) form a helical membrane-spanning segment. The Cytoplasmic segment spans residues 43–58 (RSGLGSCPPRSPRPPP). Residues 59 to 79 (SVFYVLVFGLTITDLLGKCLV) traverse the membrane as a helical segment. The Extracellular segment spans residues 80 to 107 (SPFVLSAYAQNRSLRELVPGSDSSLCQA). N-linked (GlcNAc...) asparagine glycosylation is present at Asn-90. A disulfide bond links Cys-105 and Cys-183. The chain crosses the membrane as a helical span at residues 108-128 (FAFIMSFFGLASTLQLLAMAL). Residues 129-150 (ECWLSLGHPFFHRRHLTPRRGA) are Cytoplasmic-facing. A helical transmembrane segment spans residues 151–171 (MVAPVVGAFCLAFCALPLVGF). Residues 172–195 (GKFVQYCPGTWCFFQMVHEERSLS) are Extracellular-facing. A helical membrane pass occupies residues 196 to 216 (VLSYSVLYASLMLLLVLAIVL). Over 217–262 (CNLSAMRNLYAMHLRLRGLLRPGSRERAEPGAGEREATPLHLEELD) the chain is Cytoplasmic. The chain crosses the membrane as a helical span at residues 263-283 (HLLLLALMTVLFTMCSLPLIY). The Extracellular segment spans residues 284–310 (RAYYGAFKAVPEQNGTTEETEDLRALR). A glycan (N-linked (GlcNAc...) asparagine) is linked at Asn-297. A helical membrane pass occupies residues 311-331 (FLSVISIVDPWIFIIFRTSVF). The Cytoplasmic segment spans residues 332–361 (RMFFRKIFIRPLIYRNWHSNSCQTNMESSL).

This sequence belongs to the G-protein coupled receptor 1 family.

Its subcellular location is the cell membrane. Its function is as follows. Receptor for prostaglandin D2 (PGD2). The activity of this receptor is mainly mediated by G(s) proteins that stimulate adenylate cyclase, resulting in an elevation of intracellular cAMP. A mobilization of calcium is also observed, but without formation of inositol 1,4,5-trisphosphate. Involved in PLA2G3-dependent maturation of mast cells. PLA2G3 is secreted by immature mast cells and acts on nearby fibroblasts upstream to PTDGS to synthesize PGD2, which in turn promotes mast cell maturation and degranulation via PTGDR. The polypeptide is Prostaglandin D2 receptor (PTGDR) (Bos taurus (Bovine)).